The sequence spans 232 residues: Large ribosomal subunit protein uL1 (232 aa).

This sequence belongs to the universal ribosomal protein uL1 family. Part of the 50S ribosomal subunit.

Binds directly to 23S rRNA. The L1 stalk is quite mobile in the ribosome, and is involved in E site tRNA release. Its function is as follows. Protein L1 is also a translational repressor protein, it controls the translation of the L11 operon by binding to its mRNA. This chain is Large ribosomal subunit protein uL1, found in Levilactobacillus brevis (strain ATCC 367 / BCRC 12310 / CIP 105137 / JCM 1170 / LMG 11437 / NCIMB 947 / NCTC 947) (Lactobacillus brevis).